A 118-amino-acid chain; its full sequence is DNA-binding protein Msp_0595 (118 aa).

Residues 15–44 are compositionally biased toward low complexity; sequence LKQQQLAAQQQQGASLEQMQQEEQARQQFE. Positions 15 to 45 are disordered; the sequence is LKQQQLAAQQQQGASLEQMQQEEQARQQFEN.

This sequence belongs to the PDCD5 family.

The sequence is that of DNA-binding protein Msp_0595 from Methanosphaera stadtmanae (strain ATCC 43021 / DSM 3091 / JCM 11832 / MCB-3).